Reading from the N-terminus, the 392-residue chain is Alkaline phosphatase L (392 aa).

Positions 1 to 23 are cleaved as a signal peptide; that stretch reads MYKRSLIAASLSVAALVSAQAMA.

This sequence belongs to the PstS family. Homodimer.

Its subcellular location is the secreted. The protein resides in the periplasm. The catalysed reaction is a phosphate monoester + H2O = an alcohol + phosphate. Has both a phosphomonoesterase and phosphodiesterase activity. This chain is Alkaline phosphatase L, found in Pseudomonas aeruginosa.